Here is a 546-residue protein sequence, read N- to C-terminus: MGPDNRRILLATVLSVGILILWQVIFPTKKAPPKPAHPPAAEVAKPAAPASPAPGAAAPAVPAPPPDAPEETVTLAGKGFEATLTTYGGALKSLRLEGDKFRKQEKDREVQIDLVHVTSGQPYPLSLSASPELGGAVDVAADPGARAPMRIVANDASSVTFEGRVGNLAARKTFRVTGKPYELALDVELSGGAGSGTVGVLYPAFMPPDTKSGGIFSGPPLDFVRPVCRAGTTTERFDLAKEGAPEKLEGQVSWAGVDQHYFVAAVLPAEPIGTCTFVRGPVKGAGLAAVAVPVEGGARKLSLTVYAGPKDLDTLRGYGRGFESAIDYGAVAKFFALFARGLLYVMRWLEAIVRNWGVAIILLTVLVRLVLFPLTYKSMQSMNEMRKLQPEIEKLKAKFGDDREKMNLAVMQLYQKHKVNPLGGCLPMLLQMPVWFALYAALQTSVELYREPFLWMKDLTAHDPYFILPIAMGISSFVMQKLSPQPADNAQAKMMLYFFPGFFTVIMLFVPGGLTLYIFVNNLLSIVQQQLMMKHQQAAPAPAAGK.

Residues 8-28 (ILLATVLSVGILILWQVIFPT) form a helical membrane-spanning segment. A disordered region spans residues 31-70 (APPKPAHPPAAEVAKPAAPASPAPGAAAPAVPAPPPDAPE). Positions 39 to 60 (PAAEVAKPAAPASPAPGAAAPA) are enriched in low complexity. Transmembrane regions (helical) follow at residues 326 to 346 (IDYG…LYVM), 356 to 376 (WGVA…PLTY), 422 to 442 (LGGC…YAAL), 459 to 479 (LTAH…SFVM), and 498 to 518 (FFPG…TLYI).

It belongs to the OXA1/ALB3/YidC family. Type 1 subfamily. Interacts with the Sec translocase complex via SecD. Specifically interacts with transmembrane segments of nascent integral membrane proteins during membrane integration.

The protein localises to the cell inner membrane. Functionally, required for the insertion and/or proper folding and/or complex formation of integral membrane proteins into the membrane. Involved in integration of membrane proteins that insert both dependently and independently of the Sec translocase complex, as well as at least some lipoproteins. Aids folding of multispanning membrane proteins. In Anaeromyxobacter dehalogenans (strain 2CP-1 / ATCC BAA-258), this protein is Membrane protein insertase YidC.